The primary structure comprises 299 residues: Pyridoxal 5'-phosphate synthase subunit PdxS (299 aa).

Aspartate 29 contributes to the D-ribose 5-phosphate binding site. Residue lysine 86 is the Schiff-base intermediate with D-ribose 5-phosphate of the active site. Glycine 158 serves as a coordination point for D-ribose 5-phosphate. Residue arginine 170 participates in D-glyceraldehyde 3-phosphate binding. Residues glycine 219 and 240-241 (GS) each bind D-ribose 5-phosphate.

Belongs to the PdxS/SNZ family. As to quaternary structure, in the presence of PdxT, forms a dodecamer of heterodimers.

It catalyses the reaction aldehydo-D-ribose 5-phosphate + D-glyceraldehyde 3-phosphate + L-glutamine = pyridoxal 5'-phosphate + L-glutamate + phosphate + 3 H2O + H(+). The protein operates within cofactor biosynthesis; pyridoxal 5'-phosphate biosynthesis. Catalyzes the formation of pyridoxal 5'-phosphate from ribose 5-phosphate (RBP), glyceraldehyde 3-phosphate (G3P) and ammonia. The ammonia is provided by the PdxT subunit. Can also use ribulose 5-phosphate and dihydroxyacetone phosphate as substrates, resulting from enzyme-catalyzed isomerization of RBP and G3P, respectively. The polypeptide is Pyridoxal 5'-phosphate synthase subunit PdxS (Mycobacterium bovis (strain ATCC BAA-935 / AF2122/97)).